Here is a 143-residue protein sequence, read N- to C-terminus: Small ribosomal subunit protein bS6 (143 aa).

The tract at residues 98–143 (TEQSLIMKSKDEKGDKPERSERRRRDDEEGEAPAANDNDGDNAEAA) is disordered. A compositionally biased stretch (basic and acidic residues) spans 105–124 (KSKDEKGDKPERSERRRRDD).

The protein belongs to the bacterial ribosomal protein bS6 family.

In terms of biological role, binds together with bS18 to 16S ribosomal RNA. This is Small ribosomal subunit protein bS6 from Xanthomonas euvesicatoria pv. vesicatoria (strain 85-10) (Xanthomonas campestris pv. vesicatoria).